Here is a 157-residue protein sequence, read N- to C-terminus: Endoribonuclease YbeY (157 aa).

Residues histidine 113, histidine 117, and histidine 123 each contribute to the Zn(2+) site.

Belongs to the endoribonuclease YbeY family. It depends on Zn(2+) as a cofactor.

It localises to the cytoplasm. Functionally, single strand-specific metallo-endoribonuclease involved in late-stage 70S ribosome quality control and in maturation of the 3' terminus of the 16S rRNA. The protein is Endoribonuclease YbeY of Ehrlichia ruminantium (strain Welgevonden).